Reading from the N-terminus, the 87-residue chain is HssA/B-like protein 54 (87 aa).

This sequence belongs to the hssA/B family.

This is HssA/B-like protein 54 (hssl54) from Dictyostelium discoideum (Social amoeba).